The chain runs to 35 residues: Dermonecrotic toxin LdSicTox-alpha-1 (35 aa).

Residue His11 is part of the active site. Mg(2+)-binding residues include Glu31 and Asp33.

It belongs to the arthropod phospholipase D family. Class I subfamily. Mg(2+) serves as cofactor. Post-translationally, contains 1 disulfide bond. Expressed by the venom gland.

It localises to the secreted. The catalysed reaction is an N-(acyl)-sphingosylphosphocholine = an N-(acyl)-sphingosyl-1,3-cyclic phosphate + choline. It carries out the reaction an N-(acyl)-sphingosylphosphoethanolamine = an N-(acyl)-sphingosyl-1,3-cyclic phosphate + ethanolamine. The enzyme catalyses a 1-acyl-sn-glycero-3-phosphocholine = a 1-acyl-sn-glycero-2,3-cyclic phosphate + choline. It catalyses the reaction a 1-acyl-sn-glycero-3-phosphoethanolamine = a 1-acyl-sn-glycero-2,3-cyclic phosphate + ethanolamine. Functionally, dermonecrotic toxins cleave the phosphodiester linkage between the phosphate and headgroup of certain phospholipids (sphingolipid and lysolipid substrates), forming an alcohol (often choline) and a cyclic phosphate. This toxin acts on sphingomyelin (SM). It may also act on ceramide phosphoethanolamine (CPE), lysophosphatidylcholine (LPC) and lysophosphatidylethanolamine (LPE), but not on lysophosphatidylserine (LPS), and lysophosphatidylglycerol (LPG). It acts by transphosphatidylation, releasing exclusively cyclic phosphate products as second products. Induces dermonecrosis, hemolysis, increased vascular permeability, edema, inflammatory response, and platelet aggregation. The chain is Dermonecrotic toxin LdSicTox-alpha-1 from Loxosceles deserta (Desert recluse spider).